Reading from the N-terminus, the 305-residue chain is Aspartate carbamoyltransferase catalytic subunit (305 aa).

Carbamoyl phosphate is bound by residues Arg-54 and Thr-55. Lys-82 is a binding site for L-aspartate. Positions 104, 132, and 135 each coordinate carbamoyl phosphate. L-aspartate is bound by residues Arg-165 and Arg-218. Carbamoyl phosphate contacts are provided by Gly-259 and Pro-260.

It belongs to the aspartate/ornithine carbamoyltransferase superfamily. ATCase family. Heterododecamer (2C3:3R2) of six catalytic PyrB chains organized as two trimers (C3), and six regulatory PyrI chains organized as three dimers (R2).

The catalysed reaction is carbamoyl phosphate + L-aspartate = N-carbamoyl-L-aspartate + phosphate + H(+). Its pathway is pyrimidine metabolism; UMP biosynthesis via de novo pathway; (S)-dihydroorotate from bicarbonate: step 2/3. Catalyzes the condensation of carbamoyl phosphate and aspartate to form carbamoyl aspartate and inorganic phosphate, the committed step in the de novo pyrimidine nucleotide biosynthesis pathway. The protein is Aspartate carbamoyltransferase catalytic subunit of Caldicellulosiruptor bescii (strain ATCC BAA-1888 / DSM 6725 / KCTC 15123 / Z-1320) (Anaerocellum thermophilum).